We begin with the raw amino-acid sequence, 517 residues long: Protein translocase subunit SecD (517 aa).

Transmembrane regions (helical) follow at residues 5–25, 357–377, 380–400, 407–427, 455–475, and 479–499; these read LRWI…FPLD, IWAG…YYKF, FIAS…MGMF, PGIA…VLIF, IIDS…FGTG, and GFAV…VTLS.

This sequence belongs to the SecD/SecF family. SecD subfamily. As to quaternary structure, forms a complex with SecF. Part of the essential Sec protein translocation apparatus which comprises SecA, SecYEG and auxiliary proteins SecDF. Other proteins may also be involved.

Its subcellular location is the cell inner membrane. Its function is as follows. Part of the Sec protein translocase complex. Interacts with the SecYEG preprotein conducting channel. SecDF uses the proton motive force (PMF) to complete protein translocation after the ATP-dependent function of SecA. The polypeptide is Protein translocase subunit SecD (Calditerrivibrio nitroreducens (strain DSM 19672 / NBRC 101217 / Yu37-1)).